A 122-amino-acid polypeptide reads, in one-letter code: Large ribosomal subunit protein uL14 (122 aa).

This sequence belongs to the universal ribosomal protein uL14 family. As to quaternary structure, part of the 50S ribosomal subunit. Forms a cluster with proteins L3 and L19. In the 70S ribosome, L14 and L19 interact and together make contacts with the 16S rRNA in bridges B5 and B8.

In terms of biological role, binds to 23S rRNA. Forms part of two intersubunit bridges in the 70S ribosome. The chain is Large ribosomal subunit protein uL14 from Campylobacter concisus (strain 13826).